The chain runs to 473 residues: Trehalose-6-phosphate synthase (473 aa).

Arginine 10 is a binding site for D-glucose 6-phosphate. 21–22 (GG) is a UDP-alpha-D-glucose binding site. Positions 76 and 130 each coordinate D-glucose 6-phosphate. The UDP-alpha-D-glucose site is built by arginine 262 and lysine 267. Arginine 300 serves as a coordination point for D-glucose 6-phosphate. Residues phenylalanine 339 and 365–369 (LVAKE) contribute to the UDP-alpha-D-glucose site. The segment at 454–473 (TPRSPERQQQNNVATFPKLA) is disordered.

This sequence belongs to the glycosyltransferase 20 family. In terms of assembly, homotetramer.

The enzyme catalyses D-glucose 6-phosphate + UDP-alpha-D-glucose = alpha,alpha-trehalose 6-phosphate + UDP + H(+). Its pathway is glycan biosynthesis; trehalose biosynthesis. Functionally, probably involved in the osmoprotection via the biosynthesis of trehalose. Catalyzes the transfer of glucose from UDP-alpha-D-glucose (UDP-Glc) to D-glucose 6-phosphate (Glc-6-P) to form trehalose-6-phosphate. Acts with retention of the anomeric configuration of the UDP-sugar donor. This chain is Trehalose-6-phosphate synthase, found in Salmonella choleraesuis (strain SC-B67).